Here is a 573-residue protein sequence, read N- to C-terminus: N(2)-(2-carboxyethyl)arginine synthase (573 aa).

2 residues coordinate substrate: Y271 and D301. 410 to 413 (IGFF) contacts thiamine diphosphate. Residue 414–415 (RH) coordinates substrate. 436–438 (SSF) is a thiamine diphosphate binding site. D463 lines the Mg(2+) pocket. Thiamine diphosphate-binding positions include 464-465 (GG), 490-495 (NDTNGL), and Y561. The Mg(2+) site is built by N490 and T492. L571 contacts substrate.

In terms of assembly, homotetramer; dimer of dimers. The cofactor is Mg(2+). Thiamine diphosphate is required as a cofactor.

The catalysed reaction is D-glyceraldehyde 3-phosphate + L-arginine = N(2)-(2-carboxyethyl)-L-arginine + phosphate + H(+). Involved in the biosynthesis of the beta-lactamase inhibitor, clavulanic acid. Catalyzes the thiamine diphosphate (ThDP) dependent condensation of D-glyceraldehyde-3-phosphate (D-G3P) with L-arginine to yield the beta-amino acid, N2-(2-carboxyethyl)arginine (CEA) via a beta-elimination resulting in the formation of an enol which undergoes a second elimination to generate the alpha,beta-unsaturated acryloyl-ThDP. The protein is N(2)-(2-carboxyethyl)arginine synthase of Streptomyces clavuligerus.